Reading from the N-terminus, the 600-residue chain is UvrABC system protein C (600 aa).

One can recognise a GIY-YIG domain in the interval 16–94 (EKPGCYQYFD…IKEYQPRYNV (79 aa)). Residues 208 to 243 (HRLVRMYRDRMQAYSEELRFEEAQICKERIELLERY) form the UVR domain.

This sequence belongs to the UvrC family. Interacts with UvrB in an incision complex.

It is found in the cytoplasm. Functionally, the UvrABC repair system catalyzes the recognition and processing of DNA lesions. UvrC both incises the 5' and 3' sides of the lesion. The N-terminal half is responsible for the 3' incision and the C-terminal half is responsible for the 5' incision. In Porphyromonas gingivalis (strain ATCC 33277 / DSM 20709 / CIP 103683 / JCM 12257 / NCTC 11834 / 2561), this protein is UvrABC system protein C.